Consider the following 236-residue polypeptide: Phosphoribosylaminoimidazole-succinocarboxamide synthase (236 aa).

This sequence belongs to the SAICAR synthetase family.

It catalyses the reaction 5-amino-1-(5-phospho-D-ribosyl)imidazole-4-carboxylate + L-aspartate + ATP = (2S)-2-[5-amino-1-(5-phospho-beta-D-ribosyl)imidazole-4-carboxamido]succinate + ADP + phosphate + 2 H(+). It functions in the pathway purine metabolism; IMP biosynthesis via de novo pathway; 5-amino-1-(5-phospho-D-ribosyl)imidazole-4-carboxamide from 5-amino-1-(5-phospho-D-ribosyl)imidazole-4-carboxylate: step 1/2. This is Phosphoribosylaminoimidazole-succinocarboxamide synthase from Chlorobium limicola (strain DSM 245 / NBRC 103803 / 6330).